The chain runs to 410 residues: MSWDQVWIDVNLATMDPSISAPYGAITNAAIAVKDGKIAWLGPRSELPAFDVLSIPVYRGKGGWITPGLIDAHTHLIFAGNRANEFELRLQGASYEEIARSGGGIISTVKACREADEAELFELGRQRLNALAKEGVTTVEIKSGYGLDTETELKILRVARELGKHHHVDVKTTFLGAHAIPPEYKDNSDGYVDLIINKMLPAVIAENLADAVDVFCENIAFNLEQTERVLSAAKAAGLEIKLHAEQLTNMGGSALAARLGAKSVDHIEYLDEAGVKALSESGTCAVLLPGAFYFLRETQKPPIDLLRQYGVPMVLASDFNPGSSPICSTLLMLNMGCTLFRLTPEEALKGLTLNAAKALGIEDNVGSLVVGKQADFCLWDIATPAQLAYSYGVNPCKDVVKNGKLVHQHT.

The Fe(3+) site is built by His73 and His75. His73 and His75 together coordinate Zn(2+). 4-imidazolone-5-propanoate contacts are provided by Arg82, Tyr145, and His178. Tyr145 is a binding site for N-formimidoyl-L-glutamate. His243 is a binding site for Fe(3+). His243 contacts Zn(2+). Gln246 lines the 4-imidazolone-5-propanoate pocket. Asp318 is a Fe(3+) binding site. A Zn(2+)-binding site is contributed by Asp318. N-formimidoyl-L-glutamate-binding residues include Asn320 and Gly322. Position 323 (Ser323) interacts with 4-imidazolone-5-propanoate.

This sequence belongs to the metallo-dependent hydrolases superfamily. HutI family. Requires Zn(2+) as cofactor. It depends on Fe(3+) as a cofactor.

Its subcellular location is the cytoplasm. The catalysed reaction is 4-imidazolone-5-propanoate + H2O = N-formimidoyl-L-glutamate. Its pathway is amino-acid degradation; L-histidine degradation into L-glutamate; N-formimidoyl-L-glutamate from L-histidine: step 3/3. Functionally, catalyzes the hydrolytic cleavage of the carbon-nitrogen bond in imidazolone-5-propanoate to yield N-formimidoyl-L-glutamate. It is the third step in the universal histidine degradation pathway. The polypeptide is Imidazolonepropionase (Shewanella baltica (strain OS223)).